The primary structure comprises 143 residues: Transcriptional regulator MraZ (143 aa).

SpoVT-AbrB domains follow at residues 5–47 (EYEH…TLEE) and 76–119 (AVEV…DRAS).

It belongs to the MraZ family. In terms of assembly, forms oligomers.

It localises to the cytoplasm. Its subcellular location is the nucleoid. In Staphylococcus carnosus (strain TM300), this protein is Transcriptional regulator MraZ.